Reading from the N-terminus, the 229-residue chain is Urease accessory protein UreG (229 aa).

24–31 (GPVGSGKT) contributes to the GTP binding site.

This sequence belongs to the SIMIBI class G3E GTPase family. UreG subfamily. Homodimer. UreD, UreF and UreG form a complex that acts as a GTP-hydrolysis-dependent molecular chaperone, activating the urease apoprotein by helping to assemble the nickel containing metallocenter of UreC. The UreE protein probably delivers the nickel.

The protein resides in the cytoplasm. Functionally, facilitates the functional incorporation of the urease nickel metallocenter. This process requires GTP hydrolysis, probably effectuated by UreG. This chain is Urease accessory protein UreG, found in Albidiferax ferrireducens (strain ATCC BAA-621 / DSM 15236 / T118) (Rhodoferax ferrireducens).